A 469-amino-acid chain; its full sequence is Cytosolic beta-glucosidase (469 aa).

Substrate-binding residues include Gln17, His120, and Asn164. Glu165 acts as the Proton donor in catalysis. Tyr309 contacts substrate. Glu373 functions as the Nucleophile in the catalytic mechanism. Substrate contacts are provided by residues Trp417 and 424–425; that span reads EW.

This sequence belongs to the glycosyl hydrolase 1 family. Klotho subfamily. May interact with NEU2. The N-terminus is blocked. Present in small intestine (at protein level). Expressed in liver, small intestine, colon, spleen and kidney. Down-regulated in renal cell carcinomas and hepatocellular carcinomas.

Its subcellular location is the cytoplasm. The protein resides in the cytosol. The catalysed reaction is Hydrolysis of terminal, non-reducing beta-D-glucosyl residues with release of beta-D-glucose.. The enzyme catalyses a beta-D-glucosyl-(1&lt;-&gt;1')-N-acylsphing-4-enine + H2O = an N-acylsphing-4-enine + D-glucose. It carries out the reaction a beta-D-galactosyl-(1&lt;-&gt;1')-N-acylsphing-4-enine + H2O = an N-acylsphing-4-enine + D-galactose. It catalyses the reaction beta-D-glucosyl-(1&lt;-&gt;1)-sphing-4-enine + H2O = sphing-4-enine + D-glucose. The catalysed reaction is beta-D-glucosyl-(1&lt;-&gt;1)-N-octadecanoylsphing-4-enine + H2O = N-octadecanoylsphing-4-enine + D-glucose. The enzyme catalyses beta-D-galactosyl-(1&lt;-&gt;1)-sphing-4-enine + H2O = sphing-4-enine + D-galactose. It carries out the reaction beta-D-galactosyl-(1&lt;-&gt;1')-N-octadecanoylsphing-4-enine + H2O = N-octadecanoylsphing-4-enine + D-galactose. It catalyses the reaction a beta-D-xylosyl-(1&lt;-&gt;1')-N-acylsphing-4-enine + cholesterol = cholesteryl 3-beta-D-xyloside + an N-acylsphing-4-enine. With respect to regulation, inhibited by 2,4-dinitrophenyl-2-fluoro-2-deoxy-beta-D-glucopyranoside. Inhibited by sodium taurocholate. Inhibited by alpha-1-C-nonyl-DIX/AnDIX. The glucosylceramidase activity is slightly inhibited by conduritol B epoxide/CBE while the galactosylceramidase activity is not. Its function is as follows. Neutral cytosolic beta-glycosidase with a broad substrate specificity that could play a role in the catabolism of glycosylceramides. Has a significant glucosylceramidase activity in vitro. However, that activity is relatively low and its significance in vivo is not clear. Hydrolyzes galactosylceramides/GalCers, glucosylsphingosines/GlcSphs and galactosylsphingosines/GalSphs. However, the in vivo relevance of these activities is unclear. It can also hydrolyze a broad variety of dietary glycosides including phytoestrogens, flavonols, flavones, flavanones and cyanogens in vitro and could therefore play a role in the metabolism of xenobiotics. Possesses transxylosylase activity in vitro using xylosylated ceramides/XylCers (such as beta-D-xylosyl-(1&lt;-&gt;1')-N-acylsphing-4-enine) as xylosyl donors and cholesterol as acceptor. Could also play a role in the catabolism of cytosolic sialyl free N-glycans. This chain is Cytosolic beta-glucosidase, found in Homo sapiens (Human).